Consider the following 155-residue polypeptide: MLKQVEIFTDGSCLGNPGPGGYGAIMRYRQHEKTFSAGYRLTTNNRMELMAAIVALEALKEHCEVVLSTDSQYVRQGITQWIHNWKKRGWKTAEKKPVKNVDLWQRLDAALGQHKIKWEWVKGHAGHPENERCDELARAAASHPTQDDIGYQPES.

The region spanning 1–142 (MLKQVEIFTD…CDELARAAAS (142 aa)) is the RNase H type-1 domain. Aspartate 10, glutamate 48, aspartate 70, and aspartate 134 together coordinate Mg(2+).

It belongs to the RNase H family. Monomer. The cofactor is Mg(2+).

The protein localises to the cytoplasm. It catalyses the reaction Endonucleolytic cleavage to 5'-phosphomonoester.. Its function is as follows. Endonuclease that specifically degrades the RNA of RNA-DNA hybrids. The sequence is that of Ribonuclease H from Klebsiella pneumoniae (strain 342).